The following is a 319-amino-acid chain: MKTETPSVKIVAIAADEAGQRIDNFLRTQLKGVPKSMIYRILRKGEVRVNKKRIKPEYKLESGDEVRIPPVRVAEREEEAVSPHLQKVAALADVILYEDDHILVLNKPSGTAVHGGSGLSFGVIEGLRALRPEARFLELVHRLDRDTSGVLLVAKKRSALRSLHEQLREKGMQKDYLALVRGQWQSHVKTVQAPLLKNILQSGERIVRVSQEGKPSETRFKVEERYAFATLVRCSPVTGRTHQIRVHTQYAGHPIAFDDRYGDREFDQQLTEAGTGLKRLFLHAAALKFTHPGTGDVMRIEAPMDKQLKRCLEVLRSKA.

The S4 RNA-binding domain occupies 20–83; it reads QRIDNFLRTQ…AEREEEAVSP (64 aa). Asp-144 is an active-site residue.

Belongs to the pseudouridine synthase RluA family.

It carries out the reaction uridine(955/2504/2580) in 23S rRNA = pseudouridine(955/2504/2580) in 23S rRNA. Its function is as follows. Responsible for synthesis of pseudouridine from uracil at positions 955, 2504 and 2580 in 23S ribosomal RNA. In Salmonella typhi, this protein is Ribosomal large subunit pseudouridine synthase C (rluC).